Here is a 149-residue protein sequence, read N- to C-terminus: Large ribosomal subunit protein uL15A (149 aa).

The disordered stretch occupies residues 21–40 (RIGKHRKQRGGRGNAGGQHH).

Belongs to the universal ribosomal protein uL15 family. In terms of assembly, component of the large ribosomal subunit.

It localises to the cytoplasm. The protein localises to the cytosol. The protein resides in the endoplasmic reticulum. Its function is as follows. Component of the large ribosomal subunit. The ribosome is a large ribonucleoprotein complex responsible for the synthesis of proteins in the cell. This chain is Large ribosomal subunit protein uL15A (rpl27a-1), found in Entamoeba histolytica (strain ATCC 30459 / HM-1:IMSS / ABRM).